Consider the following 106-residue polypeptide: Ig kappa chain C region, A allele (106 aa).

In terms of domain architecture, Ig-like spans 5–102; sequence PTVSIFPPSM…SSSPVVKSFN (98 aa). Residues cysteine 26 and cysteine 86 are joined by a disulfide bond.

The protein is Ig kappa chain C region, A allele of Rattus norvegicus (Rat).